The sequence spans 185 residues: Crossover junction endodeoxyribonuclease RuvC (185 aa).

Active-site residues include Asp-7, Glu-66, and Asp-137. The Mg(2+) site is built by Asp-7, Glu-66, and Asp-137.

Belongs to the RuvC family. As to quaternary structure, homodimer which binds Holliday junction (HJ) DNA. The HJ becomes 2-fold symmetrical on binding to RuvC with unstacked arms; it has a different conformation from HJ DNA in complex with RuvA. In the full resolvosome a probable DNA-RuvA(4)-RuvB(12)-RuvC(2) complex forms which resolves the HJ. Mg(2+) serves as cofactor.

It localises to the cytoplasm. It carries out the reaction Endonucleolytic cleavage at a junction such as a reciprocal single-stranded crossover between two homologous DNA duplexes (Holliday junction).. Its function is as follows. The RuvA-RuvB-RuvC complex processes Holliday junction (HJ) DNA during genetic recombination and DNA repair. Endonuclease that resolves HJ intermediates. Cleaves cruciform DNA by making single-stranded nicks across the HJ at symmetrical positions within the homologous arms, yielding a 5'-phosphate and a 3'-hydroxyl group; requires a central core of homology in the junction. The consensus cleavage sequence is 5'-(A/T)TT(C/G)-3'. Cleavage occurs on the 3'-side of the TT dinucleotide at the point of strand exchange. HJ branch migration catalyzed by RuvA-RuvB allows RuvC to scan DNA until it finds its consensus sequence, where it cleaves and resolves the cruciform DNA. The sequence is that of Crossover junction endodeoxyribonuclease RuvC from Anaeromyxobacter sp. (strain K).